The following is a 470-amino-acid chain: Calcium/manganese antiporter SLC30A10 (470 aa).

Residues 1-10 (MGRYSGKTCR) lie on the Cytoplasmic side of the membrane. The chain crosses the membrane as a helical span at residues 11–31 (LLFMLVLTAAFFVAELVSGYL). At 32–34 (GNS) the chain is on the extracellular side. The helical transmembrane segment at 35 to 55 (IALLSDSFNMLSDLISLCVGL) threads the bilayer. Residues 56–81 (GSGYIARRGPRGSSATYGYVRAEVVG) are Cytoplasmic-facing. A helical transmembrane segment spans residues 82–102 (ALSNAVFLTALCFTIFVEAVL). Residues 103–113 (RLARPERIDDP) lie on the Extracellular side of the membrane. The chain crosses the membrane as a helical span at residues 114–134 (ELVLIVGALGLAVNVVGLLIF). The Cytoplasmic segment spans residues 135–233 (QDCGACFSRC…KSEALNIRGV (99 aa)). Residues 146 to 223 (RGRRTRPSQQ…EPEETTKKEK (78 aa)) are disordered. Low complexity predominate over residues 171–184 (AATATAPGSGTAVT). Residues 234–254 (LLHVMGDALGSVVVVITAIIF) form a helical membrane-spanning segment. The Extracellular portion of the chain corresponds to 255–270 (YVQPLRREDPCNWQCY). A helical transmembrane segment spans residues 271–291 (IDPSLTVVMVIIILSSAFPLI). Residues 292 to 470 (KETAVILLQM…RQHYENSTHF (179 aa)) are Cytoplasmic-facing. A required for plasma membrane localization region spans residues 300–470 (QMVPKGVNME…RQHYENSTHF (171 aa)). A disordered region spans residues 451 to 470 (QGQTLSKTQERQHYENSTHF). Residues 458 to 470 (TQERQHYENSTHF) are compositionally biased toward basic and acidic residues.

This sequence belongs to the cation diffusion facilitator (CDF) transporter (TC 2.A.4) family. SLC30A subfamily. Forms homodimers. Forms heterodimers and high-molecular weight oligomers with SLC30A3, SLC30A2 and SLC30A4; heterodimerization is mediated by covalent-bound tyrosine residues, occurs probably in a tissue-specific manner and could mediate the intracellular zinc transport activity into early endosomes and recycling endosomes. Specifically expressed in fetal liver and fetal brain.

Its subcellular location is the cell membrane. The protein localises to the golgi apparatus membrane. It localises to the recycling endosome membrane. The protein resides in the early endosome membrane. The enzyme catalyses Mn(2+)(out) + Ca(2+)(in) = Mn(2+)(in) + Ca(2+)(out). It catalyses the reaction Zn(2+)(in) = Zn(2+)(out). Functionally, calcium:manganese antiporter of the plasma membrane mediating the efflux of intracellular manganese coupled to an active extracellular calcium exchange. Required for intracellular manganese homeostasis, an essential cation for the function of several enzymes, including some crucially important for the metabolism of neurotransmitters and other neuronal metabolic pathways. Manganese can also be cytotoxic and induce oxidative stress, mitochondrial dysfunction and apoptosis. Could also have an intracellular zinc ion transporter activity, directly regulating intracellular zinc ion homeostasis and more indirectly various signaling pathway and biological processes. This is Calcium/manganese antiporter SLC30A10 from Mus musculus (Mouse).